The following is a 446-amino-acid chain: Histidine--tRNA ligase (446 aa).

The protein belongs to the class-II aminoacyl-tRNA synthetase family. In terms of assembly, homodimer.

It localises to the cytoplasm. The enzyme catalyses tRNA(His) + L-histidine + ATP = L-histidyl-tRNA(His) + AMP + diphosphate + H(+). This chain is Histidine--tRNA ligase, found in Paraburkholderia phytofirmans (strain DSM 17436 / LMG 22146 / PsJN) (Burkholderia phytofirmans).